The primary structure comprises 455 residues: Kynurenine 3-monooxygenase (455 aa).

The protein belongs to the aromatic-ring hydroxylase family. KMO subfamily. FAD is required as a cofactor.

The catalysed reaction is L-kynurenine + NADPH + O2 + H(+) = 3-hydroxy-L-kynurenine + NADP(+) + H2O. It participates in cofactor biosynthesis; NAD(+) biosynthesis; quinolinate from L-kynurenine: step 1/3. In terms of biological role, catalyzes the hydroxylation of L-kynurenine (L-Kyn) to form 3-hydroxy-L-kynurenine (L-3OHKyn). Required for synthesis of quinolinic acid. This is Kynurenine 3-monooxygenase from Xanthomonas oryzae pv. oryzae (strain MAFF 311018).